The sequence spans 244 residues: SPX domain-containing protein 6 (244 aa).

The region spanning Met-1–Glu-147 is the SPX domain. Positions Gly-212 to Gln-244 are disordered.

The sequence is that of SPX domain-containing protein 6 (SPX6) from Oryza sativa subsp. indica (Rice).